Reading from the N-terminus, the 604-residue chain is MKEKTPTPMKNIRNFSIIAHIDHGKSTLADCLIAECNAISNREMTSQVMDTMDIEKERGITIKAQSVRLNYTFKGEDYVLNLIDTPGHVDFSYEVSRSLCSCEGALLVVDATQGVEAQTIANTYIALDNNLEILPVINKIDLPNANVLEIKQDIEDTIGIDCSNANEVSAKAKLGIKDLLEKIITTIPAPSGDPNAPLKALIYDSWFDNYLGALALVRIMDGSINTEQEILVMGTGKKHGVLGLYYPNPLKKIPTKSLECGEIGIVSLGLKSVTDIAVGDTLTDAKNPTPKPIEGFMPAKPFVFAGLYPIETDRFEDLREALLKLQLNDCALNFEPESSVALGFGFRVGFLGLLHMEVIKERLEREFGLNLIATAPTVVYEVHLTDNSIKYVQNPSELPPENHIACIKEPFVRATIITPSEFLGNLMQLLNNKRGIQEKMEYLNQSRVMLTYSLPSNEIVMDFYDKLKSCTKGYASFDYEPIENREAHLVKLDVRVAGDVVDALSIIIDKNKAYEKGRALVETMKELIPRQLFEVAIQASVGNKIIARETIKSVGKNVTAKCYGGDITRKRKLLEKQKEGKKRMKAIGKVELPQEAFLAILKID.

A tr-type G domain is found at 10-191 (KNIRNFSIIA…KIITTIPAPS (182 aa)). GTP-binding positions include 22–27 (DHGKST) and 138–141 (NKID).

It belongs to the TRAFAC class translation factor GTPase superfamily. Classic translation factor GTPase family. LepA subfamily.

Its subcellular location is the cell inner membrane. The catalysed reaction is GTP + H2O = GDP + phosphate + H(+). Required for accurate and efficient protein synthesis under certain stress conditions. May act as a fidelity factor of the translation reaction, by catalyzing a one-codon backward translocation of tRNAs on improperly translocated ribosomes. Back-translocation proceeds from a post-translocation (POST) complex to a pre-translocation (PRE) complex, thus giving elongation factor G a second chance to translocate the tRNAs correctly. Binds to ribosomes in a GTP-dependent manner. In Helicobacter pylori (strain P12), this protein is Elongation factor 4.